We begin with the raw amino-acid sequence, 380 residues long: Protein COS12 (380 aa).

Topologically, residues 1–70 (MDGAKFENTV…WKIRGKRHYL (70 aa)) are cytoplasmic. A helical transmembrane segment spans residues 71–91 (VIVTALMFEVLYFLWTYSYIF). Topologically, residues 92–231 (RERTLGKQVS…KLLWAFKEVT (140 aa)) are extracellular. The helical transmembrane segment at 232–252 (IMNSRFAFFSIAYLNGLLTIP) threads the bilayer. At 253–257 (RLRNS) the chain is on the cytoplasmic side. The helical transmembrane segment at 258–278 (LHILYVCAVLSSMIIEYLIGI) threads the bilayer. The Extracellular portion of the chain corresponds to 279-380 (DKFRFKSMNL…KEAQSACNDV (102 aa)).

The protein belongs to the DUP/COS family.

The protein localises to the membrane. This chain is Protein COS12 (COS12), found in Saccharomyces cerevisiae (strain ATCC 204508 / S288c) (Baker's yeast).